The chain runs to 123 residues: Snaclec echicetin subunit beta (123 aa).

The region spanning 1-121 (NCLPDWSVYE…SGEFYFVCKC (121 aa)) is the C-type lectin domain. Disulfide bonds link cysteine 2–cysteine 13, cysteine 30–cysteine 119, and cysteine 96–cysteine 111.

This sequence belongs to the snaclec family. Heterodimer of subunits alpha and beta; disulfide-linked. Forms an active complex with the pentameric immunoglobuline Mkappa (IgMkappa). As to expression, expressed by the venom gland.

The protein resides in the secreted. Its function is as follows. Echicetin itself inhibits aggregation of washed platelets induced by vWF, thrombin or alboaggregin-A. However, when complexed with the pentameric plasma immunoglobulin Mkappa (IgMkappa), echicetin binds specifically to GPIb and activates platelets. This is caused by P-selectin expression and activation of alpha-IIb/beta-3 as well as tyrosine phosphorylation of several signal transduction molecules, including p53/56(LYN), p64, p72(SYK), p70 to p90, and p120. In vivo, it induces thrombocytopenia when injected into mice, probably accounting of activation of platelets rather than inhibition. The polypeptide is Snaclec echicetin subunit beta (Echis carinatus sochureki (Saw-scaled viper)).